Here is a 237-residue protein sequence, read N- to C-terminus: Phosphoribosylaminoimidazole-succinocarboxamide synthase (237 aa).

It belongs to the SAICAR synthetase family.

It catalyses the reaction 5-amino-1-(5-phospho-D-ribosyl)imidazole-4-carboxylate + L-aspartate + ATP = (2S)-2-[5-amino-1-(5-phospho-beta-D-ribosyl)imidazole-4-carboxamido]succinate + ADP + phosphate + 2 H(+). The protein operates within purine metabolism; IMP biosynthesis via de novo pathway; 5-amino-1-(5-phospho-D-ribosyl)imidazole-4-carboxamide from 5-amino-1-(5-phospho-D-ribosyl)imidazole-4-carboxylate: step 1/2. In Yersinia enterocolitica serotype O:8 / biotype 1B (strain NCTC 13174 / 8081), this protein is Phosphoribosylaminoimidazole-succinocarboxamide synthase.